The chain runs to 117 residues: Small ribosomal subunit protein eS25 (117 aa).

The segment at 1–34 is disordered; it reads MPPKKDPKGGKAPPSKKKEGSGGGKAKKKKWSKG. Residues 25–34 are compositionally biased toward basic residues; the sequence is KAKKKKWSKG.

The protein belongs to the eukaryotic ribosomal protein eS25 family.

In Caenorhabditis elegans, this protein is Small ribosomal subunit protein eS25 (rps-25).